A 346-amino-acid chain; its full sequence is Phosphoribosylformylglycinamidine cyclo-ligase (346 aa).

Belongs to the AIR synthase family.

It is found in the cytoplasm. The enzyme catalyses 2-formamido-N(1)-(5-O-phospho-beta-D-ribosyl)acetamidine + ATP = 5-amino-1-(5-phospho-beta-D-ribosyl)imidazole + ADP + phosphate + H(+). Its pathway is purine metabolism; IMP biosynthesis via de novo pathway; 5-amino-1-(5-phospho-D-ribosyl)imidazole from N(2)-formyl-N(1)-(5-phospho-D-ribosyl)glycinamide: step 2/2. The chain is Phosphoribosylformylglycinamidine cyclo-ligase from Bacillus anthracis (strain A0248).